The chain runs to 1363 residues: Vascular endothelial growth factor receptor 3 (1363 aa).

The N-terminal stretch at 1 to 24 (MQPGAALNRRLWLCLGLLQGLANG) is a signal peptide. At 25-775 (YSMTPPTLNI…EGSEDKGSME (751 aa)) the chain is on the extracellular side. Asn33, Asn104, Asn166, Asn251, Asn299, and Asn411 each carry an N-linked (GlcNAc...) asparagine glycan. Ig-like C2-type domains lie at 44 to 118 (GDSL…YIKA), 151 to 213 (KDSM…WGDQ), 230 to 326 (YDIQ…TEVI), 331 to 415 (PFIS…ISLE), 422 to 552 (PHIH…FYVT), 555 to 671 (PDGF…KYLS), and 678 to 764 (PRLT…ASVA). Intrachain disulfides connect Cys51–Cys111 and Cys158–Cys206. An intrachain disulfide couples Cys252 to Cys310. Intrachain disulfides connect Cys445/Cys534, Cys466/Cys486, and Cys578/Cys653. N-linked (GlcNAc...) asparagine glycosylation is found at Asn515, Asn527, Asn582, Asn594, and Asn683. A disulfide bridge links Cys699 with Cys751. N-linked (GlcNAc...) asparagine glycosylation is present at Asn758. The chain crosses the membrane as a helical span at residues 776 to 796 (IVILIGTGVIAVFFWVLLLLI). The Cytoplasmic segment spans residues 797–1363 (FCNMKRPAHA…GSTFFADSNY (567 aa)). Tyr830 and Tyr833 each carry phosphotyrosine; by SRC. Positions 845 to 1173 (LHLGRVLGHG…DLVEILGDLL (329 aa)) constitute a Protein kinase domain. ATP-binding positions include 851–859 (LGHGAFGKV) and Lys879. Catalysis depends on Asp1037, which acts as the Proton acceptor. Tyr1063 bears the Phosphotyrosine; by autocatalysis and SRC mark. A phosphotyrosine; by autocatalysis mark is found at Tyr1068, Tyr1230, Tyr1231, and Tyr1265. Residues 1289-1317 (SRHRQEGSFSRKDPGQHMDISRGHPDLQG) are compositionally biased toward basic and acidic residues. Positions 1289–1330 (SRHRQEGSFSRKDPGQHMDISRGHPDLQGRRRRPTQGAQGGK) are disordered. Tyr1333 and Tyr1337 each carry phosphotyrosine; by autocatalysis and SRC. Tyr1363 carries the post-translational modification Phosphotyrosine; by autocatalysis.

Belongs to the protein kinase superfamily. Tyr protein kinase family. CSF-1/PDGF receptor subfamily. Interacts with VEGFC and VEGFD. Monomer in the absence of bound VEGFC or VEGFD. Homodimer in the presence of bound VEGFC or VEGFD. Can also form a heterodimer with KDR. Interacts with PTPN14; the interaction is enhanced by stimulation with VEGFC. Interacts with CRK, GRB2, PTK2/FAK1, SHC1, PIK3R1 and PTPN11/SHP-2. Identified in a complex with SRC and ITGB1. Identified in a complex with SRC and ITGB1. Post-translationally, autophosphorylated on tyrosine residues upon ligand binding. Autophosphorylation occurs in trans, i.e. one subunit of the dimeric receptor phosphorylates tyrosine residues on the other subunit. Phosphorylation in response to H(2)O(2) is mediated by a process that requires SRC and PRKCD activity. Phosphorylation at Tyr-1068 is required for autophosphorylation at additional tyrosine residues. Phosphorylation at Tyr-1063 and Tyr-1337 is important for interaction with CRK and subsequent activation of MAPK8. Phosphorylation at Tyr-1230, Tyr-1231 and Tyr-1337 is important for interaction with GRB2 and subsequent activation of the AKT1 and MAPK1/ERK2 and/or MAPK3/ERK1 signaling pathways. In response to endothelial cell adhesion onto collagen, can also be phosphorylated in the absence of FLT4 kinase activity by SRC.

It is found in the cell membrane. It localises to the cytoplasm. The protein localises to the nucleus. The catalysed reaction is L-tyrosyl-[protein] + ATP = O-phospho-L-tyrosyl-[protein] + ADP + H(+). Present in an inactive conformation in the absence of bound ligand. Binding of VEGFC or VEGFD leads to dimerization and activation by autophosphorylation on tyrosine residues. Functionally, tyrosine-protein kinase that acts as a cell-surface receptor for VEGFC and VEGFD, and plays an essential role in adult lymphangiogenesis and in the development of the vascular network and the cardiovascular system during embryonic development. Promotes proliferation, survival and migration of endothelial cells, and regulates angiogenic sprouting. Signaling by activated FLT4 leads to enhanced production of VEGFC, and to a lesser degree VEGFA, thereby creating a positive feedback loop that enhances FLT4 signaling. Modulates KDR signaling by forming heterodimers. Mediates activation of the MAPK1/ERK2, MAPK3/ERK1 signaling pathway, of MAPK8 and the JUN signaling pathway, and of the AKT1 signaling pathway. Phosphorylates SHC1. Mediates phosphorylation of PIK3R1, the regulatory subunit of phosphatidylinositol 3-kinase. Promotes phosphorylation of MAPK8 at 'Thr-183' and 'Tyr-185', and of AKT1 at 'Ser-473'. The protein is Vascular endothelial growth factor receptor 3 (Flt4) of Rattus norvegicus (Rat).